The sequence spans 747 residues: Probable alpha-galactosidase C (747 aa).

The signal sequence occupies residues 1 to 24 (MVAFMNSATFVAGLFTLWSRPIWA). Residues Asn-36, Asn-182, Asn-190, Asn-362, Asn-429, and Asn-449 are each glycosylated (N-linked (GlcNAc...) asparagine). Asp-507 serves as the catalytic Nucleophile. An N-linked (GlcNAc...) asparagine glycan is attached at Asn-534. The active-site Proton donor is Asp-569.

Belongs to the glycosyl hydrolase 36 family. As to quaternary structure, homotetramer. Mg(2+) serves as cofactor. It depends on NAD(+) as a cofactor.

It localises to the secreted. It carries out the reaction Hydrolysis of terminal, non-reducing alpha-D-galactose residues in alpha-D-galactosides, including galactose oligosaccharides, galactomannans and galactolipids.. In terms of biological role, hydrolyzes a variety of simple alpha-D-galactoside as well as more complex molecules such as oligosaccharides and polysaccharides. The chain is Probable alpha-galactosidase C (aglC) from Aspergillus terreus (strain NIH 2624 / FGSC A1156).